Reading from the N-terminus, the 291-residue chain is MAGMKEIRGKIKSVQNTRKITKAMEMVAASKMRRAQERMRAARPYAEKVRAIAAHMSRANPEYRHPFMVANEGVKTAGMILVTTDKGLCGGLNTNVLRASLQKFKELEEKGQKVEATAIGGKGLGFLNRFGAKVISQVVHLGDTPHLDKLIGAVKTQLDLYSEGRLSAVYLAYTRFVNTMKQETVIEQLLPLSSEHFDANDGTPATSWDYIYEPDAQAVVDELLVRYVEALVYQAVAENMASEQSARMVAMKAASDNAKTVISELQLSYNKSRQAAITKELSEIVGGAAAV.

Belongs to the ATPase gamma chain family. As to quaternary structure, F-type ATPases have 2 components, CF(1) - the catalytic core - and CF(0) - the membrane proton channel. CF(1) has five subunits: alpha(3), beta(3), gamma(1), delta(1), epsilon(1). CF(0) has three main subunits: a, b and c.

The protein localises to the cell inner membrane. In terms of biological role, produces ATP from ADP in the presence of a proton gradient across the membrane. The gamma chain is believed to be important in regulating ATPase activity and the flow of protons through the CF(0) complex. The sequence is that of ATP synthase gamma chain from Burkholderia thailandensis (strain ATCC 700388 / DSM 13276 / CCUG 48851 / CIP 106301 / E264).